A 35-amino-acid polypeptide reads, in one-letter code: Putative gene 58 protein (35 aa).

The protein is Putative gene 58 protein (58) of Bacillus phage SP01 (Bacteriophage SP01).